We begin with the raw amino-acid sequence, 245 residues long: Carbohydrate deacetylase (245 aa).

Mg(2+) is bound by residues His-61 and His-122.

The protein belongs to the YdjC deacetylase family. Requires Mg(2+) as cofactor.

Functionally, probably catalyzes the deacetylation of acetylated carbohydrates an important step in the degradation of oligosaccharides. This chain is Carbohydrate deacetylase (celC), found in Geobacillus stearothermophilus (Bacillus stearothermophilus).